The chain runs to 184 residues: Shikimate kinase (184 aa).

Gly-12–Thr-17 provides a ligand contact to ATP. Ser-16 contributes to the Mg(2+) binding site. Residues Asp-34, Arg-58, and Gly-80 each contribute to the substrate site. ATP is bound at residue Arg-117. Arg-136 is a binding site for substrate. Arg-153 contributes to the ATP binding site. A disordered region spans residues Ser-164 to Thr-184. Residues Pro-169–Thr-184 show a composition bias toward low complexity.

The protein belongs to the shikimate kinase family. As to quaternary structure, monomer. Requires Mg(2+) as cofactor.

The protein localises to the cytoplasm. The enzyme catalyses shikimate + ATP = 3-phosphoshikimate + ADP + H(+). The protein operates within metabolic intermediate biosynthesis; chorismate biosynthesis; chorismate from D-erythrose 4-phosphate and phosphoenolpyruvate: step 5/7. Its function is as follows. Catalyzes the specific phosphorylation of the 3-hydroxyl group of shikimic acid using ATP as a cosubstrate. This Mycobacterium ulcerans (strain Agy99) protein is Shikimate kinase.